Reading from the N-terminus, the 396-residue chain is NADH-quinone oxidoreductase subunit D 2 (396 aa).

This sequence belongs to the complex I 49 kDa subunit family. In terms of assembly, NDH-1 is composed of 14 different subunits. Subunits NuoB, C, D, E, F, and G constitute the peripheral sector of the complex.

Its subcellular location is the cell inner membrane. It catalyses the reaction a quinone + NADH + 5 H(+)(in) = a quinol + NAD(+) + 4 H(+)(out). Functionally, NDH-1 shuttles electrons from NADH, via FMN and iron-sulfur (Fe-S) centers, to quinones in the respiratory chain. The immediate electron acceptor for the enzyme in this species is believed to be ubiquinone. Couples the redox reaction to proton translocation (for every two electrons transferred, four hydrogen ions are translocated across the cytoplasmic membrane), and thus conserves the redox energy in a proton gradient. This is NADH-quinone oxidoreductase subunit D 2 from Beijerinckia indica subsp. indica (strain ATCC 9039 / DSM 1715 / NCIMB 8712).